The chain runs to 269 residues: Proline-rich protein 7 (269 aa).

At 1–9 (MVMSQGTYT) the chain is on the extracellular side. The required for interaction with NMDA receptors stretch occupies residues 1-44 (MVMSQGTYTFLTCFAGFWLIWGLIVLLCCFCSFLRRRLKRRQEE). Residues 2–39 (VMSQGTYTFLTCFAGFWLIWGLIVLLCCFCSFLRRRLK) form a required for membrane localization region. Residues 10 to 30 (FLTCFAGFWLIWGLIVLLCCF) form a helical; Signal-anchor for type III membrane protein membrane-spanning segment. Residues 31–269 (CSFLRRRLKR…IPLFGRTTAV (239 aa)) lie on the Cytoplasmic side of the membrane. S64 bears the Phosphoserine mark. 2 disordered regions span residues 64–83 (SLAG…RSRL) and 98–128 (LLHH…LSVP). Positions 108–117 (AHPHPHHHAL) are enriched in basic residues. Pro residues predominate over residues 118–128 (PHPPPSHLSVP). The required for internalization stretch occupies residues 146–166 (PCYEEAVLMAEPPPPYSEVLT). A required for apoptosis induction region spans residues 146-269 (PCYEEAVLMA…IPLFGRTTAV (124 aa)). Positions 267–269 (TAV) match the PDZ-binding motif.

As to quaternary structure, forms a complex with NMDA receptor zeta subunit GRIN1 and epsilon subunit GRIN2B. Interacts with GRIN2B. Interacts with GRIN1; the interaction is reduced upon NMDA receptor activity. Found in a postsynaptic membrane complex with DLG4 and GRIN1. Interacts with DLG4 (via PDZ3 domain and to lesser degree via PDZ2 domain). Interacts with FBXW7. Found in a complex with JUN and FBXW7. Interacts with JUN and FBXW7; the interaction inhibits ubiquitination-mediated JUN degradation promoting its phosphorylation and transcriptional activity. Interacts with SRC. Post-translationally, palmitoylated. In terms of processing, tyrosine phosphorylated, possibly by SRC. Expressed in brain. Expressed in the cerebral cortex and especially in hippocampal neural cells (at protein level).

The protein resides in the cell membrane. It is found in the postsynaptic cell membrane. Its subcellular location is the postsynaptic density membrane. It localises to the cytoplasm. The protein localises to the perinuclear region. The protein resides in the synapse. It is found in the cell projection. Its subcellular location is the dendrite. It localises to the nucleus. Its function is as follows. Acts as a synapse-to-nucleus messenger to promote NMDA receptor-mediated excitotoxicity in neurons in a JUN-dependent manner. Inhibits ubiquitination-mediated degradation and promotes phosphorylation and transcriptional activity of transcription factor JUN. Might play a redundant role in the regulation of T cell receptor signaling. Might promote apoptosis in T cells. In Rattus norvegicus (Rat), this protein is Proline-rich protein 7 (Prr7).